A 547-amino-acid polypeptide reads, in one-letter code: Nitrosoguanidine resistance protein SNG1 (547 aa).

The segment at 35–86 (NQRFAEGSGHSSDLAKSLEDYRPPDEKPSSLSSVGEGGANEEEKGGNDGGPL) is disordered. Basic and acidic residues predominate over residues 50 to 62 (KSLEDYRPPDEKP). A Phosphothreonine modification is found at T91. A run of 8 helical transmembrane segments spans residues 109–129 (FVLNNFFIACVCVSLISIYWG), 159–179 (ISAIIPSLLASVPGTWHIYNA), 318–338 (ILMAPLQVGLIYCILLTVLQL), 363–383 (LISWATYFLLSIGFCTVSAIF), 394–414 (GGFVVYWMSTWLVMMAVGGAN), 418–438 (LSLVIAYCPPYLSIWLMTWII), 457–477 (YGYIMPIHNAVDIYKVIFLNL), and 488–508 (ILVAWVALNTSLMPFCMKFAG). Over residues 526–536 (ATQRASRPAEA) the composition is skewed to low complexity. Residues 526–547 (ATQRASRPAEANTDKNNNPPGN) are disordered.

This sequence to yeast YJR015W.

It localises to the membrane. In terms of biological role, may function as a N-methyl-N'nitro-N-nitrosoguanidine (MNNG) export permease. The protein is Nitrosoguanidine resistance protein SNG1 (SNG1) of Saccharomyces cerevisiae (strain ATCC 204508 / S288c) (Baker's yeast).